The chain runs to 622 residues: Vacuolar protein sorting-associated protein 27 (622 aa).

Positions 18 to 149 (SESIPNGDLD…KLISRGIKFP (132 aa)) constitute a VHS domain. Residue Ser157 is modified to Phosphoserine. Residues 170-230 (WIDSDACMIC…VCDSCFEDYD (61 aa)) form an FYVE-type; atypical zinc finger. Zn(2+)-binding residues include Cys176, Cys179, Cys192, Cys195, Cys200, His203, Cys222, and Cys225. Residues 236–260 (DSKKSKKHRHKRKKDRDYSTPEDEE) are disordered. Positions 239–249 (KSKKHRHKRKK) are enriched in basic residues. One can recognise a UIM 1 domain in the interval 258–277 (DEEELIRKAIELSLKESRNS). A Glycyl lysine isopeptide (Lys-Gly) (interchain with G-Cter in ubiquitin) cross-link involves residue Lys294. The UIM 2 domain occupies 301–320 (EEDPDLKAAIQESLREAEEA). Residues 317–328 (AEEAKLRSERQK) are compositionally biased toward basic and acidic residues. Disordered stretches follow at residues 317 to 348 (AEEAKLRSERQKASRQMQPQQPSPQPQPIHSV) and 462 to 622 (AESY…LIEL). A compositionally biased stretch (polar residues) spans 462–500 (AESYQTPPLQQLSSHQYKPQQDVSRQQSVKANSSPTTNI). At Ser495 the chain carries Phosphoserine. Residues 533 to 548 (EAEDEGTQAVQDEESS) show a composition bias toward acidic residues. Ser613 bears the Phosphoserine mark.

This sequence belongs to the VPS27 family. As to quaternary structure, component of the ESCRT-0 complex composed of HSE1 and VPS27. Interacts with ENT3 and ENT5, the ESCRT-I subunits VPS23 and VPS28 and with the COPIb subunits SEC27, SEC28 and SEC33. May form a complex composed of VPS27, HSE1 and DOA1. Interacts with DOA1. Interacts with ubiquitin.

It localises to the endosome membrane. Functionally, component of the ESCRT-0 complex which is the sorting receptor for ubiquitinated cargo proteins at the multivesicular body (MVB) and recruits ESCRT-I to the MVB outer membrane. Controls exit from the prevacuolar compartment (PVC) in both the forward direction to the vacuole and the return to the Golgi. Allows VPS10 to return to the (trans-Golgi network) TGN from the PVC. Might also function as an alternate adapter in the COPIb clathrin-like coat. This Saccharomyces cerevisiae (strain ATCC 204508 / S288c) (Baker's yeast) protein is Vacuolar protein sorting-associated protein 27 (VPS27).